Consider the following 232-residue polypeptide: Sugar fermentation stimulation protein homolog (232 aa).

The protein belongs to the SfsA family.

The sequence is that of Sugar fermentation stimulation protein homolog from Pyrobaculum arsenaticum (strain DSM 13514 / JCM 11321 / PZ6).